A 617-amino-acid polypeptide reads, in one-letter code: Dihydroxy-acid dehydratase (617 aa).

Asp-81 serves as a coordination point for Mg(2+). Cys-122 is a binding site for [2Fe-2S] cluster. Mg(2+) contacts are provided by Asp-123 and Lys-124. Residue Lys-124 is modified to N6-carboxylysine. Cys-197 is a [2Fe-2S] cluster binding site. Position 494 (Glu-494) interacts with Mg(2+). The Proton acceptor role is filled by Ser-520.

It belongs to the IlvD/Edd family. As to quaternary structure, homodimer. The cofactor is [2Fe-2S] cluster. It depends on Mg(2+) as a cofactor.

The catalysed reaction is (2R)-2,3-dihydroxy-3-methylbutanoate = 3-methyl-2-oxobutanoate + H2O. It catalyses the reaction (2R,3R)-2,3-dihydroxy-3-methylpentanoate = (S)-3-methyl-2-oxopentanoate + H2O. It functions in the pathway amino-acid biosynthesis; L-isoleucine biosynthesis; L-isoleucine from 2-oxobutanoate: step 3/4. The protein operates within amino-acid biosynthesis; L-valine biosynthesis; L-valine from pyruvate: step 3/4. In terms of biological role, functions in the biosynthesis of branched-chain amino acids. Catalyzes the dehydration of (2R,3R)-2,3-dihydroxy-3-methylpentanoate (2,3-dihydroxy-3-methylvalerate) into 2-oxo-3-methylpentanoate (2-oxo-3-methylvalerate) and of (2R)-2,3-dihydroxy-3-methylbutanoate (2,3-dihydroxyisovalerate) into 2-oxo-3-methylbutanoate (2-oxoisovalerate), the penultimate precursor to L-isoleucine and L-valine, respectively. This Parafrankia sp. (strain EAN1pec) protein is Dihydroxy-acid dehydratase.